A 375-amino-acid polypeptide reads, in one-letter code: Putative glycyl-radical enzyme activating enzyme MJ0021 (375 aa).

The Radical SAM core domain maps to Q23–D246. C38, C42, and C45 together coordinate [4Fe-4S] cluster. S-adenosyl-L-methionine is bound by residues Y44–P46 and G87.

It belongs to the organic radical-activating enzymes family. [4Fe-4S] cluster serves as cofactor.

It catalyses the reaction glycyl-[protein] + reduced [flavodoxin] + S-adenosyl-L-methionine = glycin-2-yl radical-[protein] + semiquinone [flavodoxin] + 5'-deoxyadenosine + L-methionine + H(+). This Methanocaldococcus jannaschii (strain ATCC 43067 / DSM 2661 / JAL-1 / JCM 10045 / NBRC 100440) (Methanococcus jannaschii) protein is Putative glycyl-radical enzyme activating enzyme MJ0021.